The chain runs to 444 residues: Glycerol-3-phosphate transporter (444 aa).

Residues 1–36 (MLNIFKPAPHIERLDDSKMDAAYKRLRLQVFIGIFI) lie on the Cytoplasmic side of the membrane. Residues 37-57 (GYAGYYLLRKNFAFAIPYLQE) form a helical membrane-spanning segment. The Extracellular segment spans residues 58–63 (QGFSKT). The helical transmembrane segment at 64-84 (ELGLVLAAVSIAYGFSKFIMG) threads the bilayer. The Cytoplasmic segment spans residues 85–93 (MVSDRCNPR). A helical membrane pass occupies residues 94-112 (YFLATGLFLSAIVNILFVS). Residues 113-120 (MPWVTSSV) are Extracellular-facing. A helical membrane pass occupies residues 121-141 (TIMFIFMFINGWFQGMGWPPC). The Cytoplasmic segment spans residues 142 to 160 (GRTMAHWFSISERGTKMSI). A helical transmembrane segment spans residues 161 to 180 (WNVAHNIGGGILAPLVTLGI). Residues 181-189 (AMFVTWKSV) lie on the Extracellular side of the membrane. A helical membrane pass occupies residues 190 to 207 (FFFPAIIAIIISFLIVLL). Residues 208 to 261 (VRDTPQSCGLPPIEEYRNDYPKHAFKNQEKELTTKEILFQYVLNNKFLWYIAFA) are Cytoplasmic-facing. The chain crosses the membrane as a helical span at residues 262–282 (NVFVYFVRYGVVDWAPTYLTE). Residues 283 to 287 (AKGFS) lie on the Extracellular side of the membrane. The helical transmembrane segment at 288 to 308 (PEDSRWSYFLYEYAGIPGTIL) threads the bilayer. Over 309–321 (CGWISDRFFKSRR) the chain is Cytoplasmic. Residues 322-341 (APAGVLFMAGVFIAVLVYWL) traverse the membrane as a helical segment. Residues 342–346 (NPAGN) lie on the Extracellular side of the membrane. The helical transmembrane segment at 347–368 (PLVDNIALISIGFLIYGPVMLI) threads the bilayer. At 369-387 (GLQAIDLAPKKAAGTAAGL) the chain is on the cytoplasmic side. The helical transmembrane segment at 388-409 (TGFFGYIGGSAFANAIMGFVVD) threads the bilayer. Residues 410–414 (RFNWN) lie on the Extracellular side of the membrane. A helical membrane pass occupies residues 415–435 (GGFIMLISSCILAIVFLALTW). Residues 436 to 444 (NTGKRAEHV) lie on the Cytoplasmic side of the membrane.

The protein belongs to the major facilitator superfamily. Organophosphate:Pi antiporter (OPA) (TC 2.A.1.4) family.

It localises to the cell membrane. Functionally, responsible for glycerol-3-phosphate uptake. The sequence is that of Glycerol-3-phosphate transporter (glpT) from Bacillus subtilis (strain 168).